Consider the following 258-residue polypeptide: 6-carboxyhexanoate--CoA ligase (258 aa).

Belongs to the BioW family. Homodimer. It depends on Mg(2+) as a cofactor.

It carries out the reaction heptanedioate + ATP + CoA = 6-carboxyhexanoyl-CoA + AMP + diphosphate. The protein operates within metabolic intermediate metabolism; pimeloyl-CoA biosynthesis; pimeloyl-CoA from pimelate: step 1/1. Catalyzes the transformation of pimelate into pimeloyl-CoA with concomitant hydrolysis of ATP to AMP. This Bacillus atrophaeus (strain 1942) protein is 6-carboxyhexanoate--CoA ligase.